The sequence spans 399 residues: Enoyl-[acyl-carrier-protein] reductase [NADH] (399 aa).

NAD(+) is bound by residues 48–53 (GASTGY), 74–75 (FE), 111–112 (DA), and 139–140 (LA). Residue Y225 participates in substrate binding. The Proton donor role is filled by Y235. NAD(+) contacts are provided by residues K244 and 274–276 (VVT).

This sequence belongs to the TER reductase family. Monomer.

The catalysed reaction is a 2,3-saturated acyl-[ACP] + NAD(+) = a (2E)-enoyl-[ACP] + NADH + H(+). It functions in the pathway lipid metabolism; fatty acid biosynthesis. Functionally, involved in the final reduction of the elongation cycle of fatty acid synthesis (FAS II). Catalyzes the reduction of a carbon-carbon double bond in an enoyl moiety that is covalently linked to an acyl carrier protein (ACP). In Yersinia pseudotuberculosis serotype O:1b (strain IP 31758), this protein is Enoyl-[acyl-carrier-protein] reductase [NADH].